The primary structure comprises 172 residues: Adenylate kinase isoenzyme 6 (172 aa).

5 residues coordinate ATP: Gly13, Gly15, Lys16, Thr17, and Thr18. An NMPbind region spans residues 33–56 (NVGDLAREGQLYDGYDEEYGCPIL). Positions 108–118 (TRGYNEKKLQD) are LID. Arg109 lines the ATP pocket.

The protein belongs to the adenylate kinase family. AK6 subfamily. In terms of assembly, monomer and homodimer. Interacts with small ribosomal subunit protein uS11. Not a structural component of 43S pre-ribosomes, but transiently interacts with them by binding to uS11. Interacts with COIL (via C-terminus).

Its subcellular location is the cytoplasm. The protein localises to the nucleus. The protein resides in the nucleoplasm. It localises to the cajal body. The enzyme catalyses AMP + ATP = 2 ADP. It catalyses the reaction ATP + H2O = ADP + phosphate + H(+). In terms of biological role, broad-specificity nucleoside monophosphate (NMP) kinase that catalyzes the reversible transfer of the terminal phosphate group between nucleoside triphosphates and monophosphates. Also has ATPase activity. Involved in the late cytoplasmic maturation steps of the 40S ribosomal particles, specifically 18S rRNA maturation. While NMP activity is not required for ribosome maturation, ATPase activity is. Associates transiently with small ribosomal subunit protein uS11. ATP hydrolysis breaks the interaction with uS11. May temporarily remove uS11 from the ribosome to enable a conformational change of the ribosomal RNA that is needed for the final maturation step of the small ribosomal subunit. Its NMP activity may have a role in nuclear energy homeostasis. May be involved in regulation of Cajal body (CB) formation. The sequence is that of Adenylate kinase isoenzyme 6 from Mus musculus (Mouse).